We begin with the raw amino-acid sequence, 845 residues long: Matrin-3 (845 aa).

S2 is modified (N-acetylserine). N6-acetyllysine; alternate is present on K3. K3 is covalently cross-linked (Glycyl lysine isopeptide (Lys-Gly) (interchain with G-Cter in SUMO2); alternate). Phosphoserine is present on residues S4, S9, S14, S22, S41, S118, and S126. Residues K132 and K146 each participate in a glycyl lysine isopeptide (Lys-Gly) (interchain with G-Cter in SUMO2) cross-link. 2 disordered regions span residues 147 to 174 and 187 to 213; these read RRRT…YRVP and DSFD…ESGY. T150 is subject to Phosphothreonine. S157 carries the post-translational modification Phosphoserine. Y158 is subject to Phosphotyrosine. The span at 160–174 shows a compositional bias: basic and acidic residues; it reads RDGRSATREPPYRVP. Phosphoserine occurs at positions 164, 188, and 195. Residues 201–213 are compositionally biased toward basic and acidic residues; it reads DYDHGSRSQESGY. Y202 carries the phosphotyrosine modification. 3 positions are modified to phosphoserine: S206, S208, and S211. Y219 is modified (phosphotyrosine). At S234 the chain carries Phosphoserine. A Glycyl lysine isopeptide (Lys-Gly) (interchain with G-Cter in SUMO2) cross-link involves residue K245. S264 bears the Phosphoserine mark. A Glycyl lysine isopeptide (Lys-Gly) (interchain with G-Cter in SUMO2) cross-link involves residue K269. S275 carries the phosphoserine modification. A disordered region spans residues 342–394; sequence PFMLQQSTNPAPGILGPPPPSFHLGGPAVGPRGNLGAGNGNLQGPRHMQKGRV. One can recognise an RRM 1 domain in the interval 398-473; sequence RVVHIMDFQR…KPVRVHLSQK (76 aa). Residues K478, K487, and K491 each participate in a glycyl lysine isopeptide (Lys-Gly) (interchain with G-Cter in SUMO2) cross-link. Positions 496 to 571 constitute an RRM 2 domain; it reads RVIHLSNLPH…RCVKVDLSEK (76 aa). Phosphoserine occurs at positions 509 and 511. K515 is covalently cross-linked (Glycyl lysine isopeptide (Lys-Gly) (interchain with G-Cter in SUMO2)). K522 bears the N6-acetyllysine; alternate mark. A Glycyl lysine isopeptide (Lys-Gly) (interchain with G-Cter in SUMO2); alternate cross-link involves residue K522. S533 carries the phosphoserine modification. Residues K554 and K555 each participate in a glycyl lysine isopeptide (Lys-Gly) (interchain with G-Cter in SUMO2) cross-link. N6-acetyllysine is present on K571. The tract at residues 588-785 is disordered; it reads KKDKSRKRSY…EYRIGPYQPN (198 aa). A phosphoserine mark is found at S596, S598, S604, and S606. Residues 600 to 643 show a composition bias toward basic and acidic residues; the sequence is DGKESPSDKKSKTDGAQKTENPAEGKEQEEKSGEDGEKDTKDDQ. Residues K617 and K630 each participate in a glycyl lysine isopeptide (Lys-Gly) (interchain with G-Cter in SUMO2) cross-link. Positions 653–665 are enriched in acidic residues; it reads ESEDELLVDEEEA. Phosphoserine occurs at positions 654, 671, 673, and 674. The residue at position 679 (T679) is a Phosphothreonine. At S689 the chain carries Phosphoserine. The span at 689 to 704 shows a compositional bias: basic and acidic residues; it reads SDGKKEPSDKAVKKDA. The short motif at 708–716 is the Nuclear localization signal element; sequence SKKKLKKVD. Glycyl lysine isopeptide (Lys-Gly) (interchain with G-Cter in SUMO2) cross-links involve residues K717 and K734. T739 is modified (phosphothreonine). 3 positions are modified to phosphoserine: S745, S757, and S760. Residues 765–778 are compositionally biased toward basic and acidic residues; the sequence is DENKEDYTIPDEYR. K768 is covalently cross-linked (Glycyl lysine isopeptide (Lys-Gly) (interchain with G-Cter in SUMO2)). Residues 799 to 830 form a Matrin-type zinc finger; it reads FYCKLCSLFYTNEEVAKNTHCSSLPHYQKLKK. K834 is modified (N6-acetyllysine; alternate). Residue K834 forms a Glycyl lysine isopeptide (Lys-Gly) (interchain with G-Cter in SUMO2); alternate linkage.

As to quaternary structure, part of a complex consisting of SFPQ, NONO and MATR3. Interacts with AGO1 and AGO2. Part of a complex composed at least of ASH2L, EMSY, HCFC1, HSPA8, CCAR2, MATR3, MKI67, RBBP5, TUBB2A, WDR5 and ZNF335; this complex may have a histone H3-specific methyltransferase activity. Interacts with TARDBP. Part of the HDP-RNP complex composed of at least HEXIM1, PRKDC, XRCC5, XRCC6, paraspeckle proteins (SFPQ, NONO, PSPC1, RBM14, and MATR3) and NEAT1 RNA. Interacts with FUS. Interacts with IGF2BP1. Interacts with IGF2BP2 and IGF2BP3. Interacts with RBPMS.

It localises to the nucleus matrix. In terms of biological role, may play a role in transcription or may interact with other nuclear matrix proteins to form the internal fibrogranular network. In association with the SFPQ-NONO heteromer may play a role in nuclear retention of defective RNAs. Plays a role in the regulation of DNA virus-mediated innate immune response by assembling into the HDP-RNP complex, a complex that serves as a platform for IRF3 phosphorylation and subsequent innate immune response activation through the cGAS-STING pathway. Binds to N6-methyladenosine (m6A)-containing mRNAs and contributes to MYC stability by binding to m6A-containing MYC mRNAs. May bind to specific miRNA hairpins. The protein is Matrin-3 (Matr3) of Rattus norvegicus (Rat).